Here is a 126-residue protein sequence, read N- to C-terminus: Thiocyanate hydrolase subunit alpha (126 aa).

As to quaternary structure, heterododecamer consisting of 4 alpha, 4 beta, and 4 gamma subunits.

It catalyses the reaction thiocyanate + H2O + 2 H(+) = carbonyl sulfide + NH4(+). It functions in the pathway organosulfur degradation; thiocyanate degradation. Its function is as follows. Involved in the degradation of thiocyanate. The protein is Thiocyanate hydrolase subunit alpha (scnA) of Thiobacillus thioparus.